Consider the following 440-residue polypeptide: Beta-1,3-galactosyl-O-glycosyl-glycoprotein beta-1,6-N-acetylglucosaminyltransferase 3 (440 aa).

The Cytoplasmic portion of the chain corresponds to M1–R12. A helical; Signal-anchor for type II membrane protein membrane pass occupies residues G13–L30. Residues R31–L440 are Lumenal-facing. N-linked (GlcNAc...) asparagine glycans are attached at residues N72 and N108. 4 disulfides stabilise this stretch: C73/C230, C164/C384, C185/C212, and C393/C425.

Belongs to the glycosyltransferase 14 family. In terms of processing, N-glycosylated. In terms of tissue distribution, primarily expressed in mucus-secreting tissues.

The protein localises to the golgi apparatus membrane. It carries out the reaction a 3-O-[beta-D-galactosyl-(1-&gt;3)-N-acetyl-alpha-D-galactosaminyl]-L-seryl-[protein] + UDP-N-acetyl-alpha-D-glucosamine = 3-O-{beta-D-galactosyl-(1-&gt;3)-[N-acetyl-beta-D-glucosaminyl-(1-&gt;6)]-N-acetyl-alpha-D-galactosaminyl}-L-seryl-[protein] + UDP + H(+). The catalysed reaction is a 3-O-[beta-D-galactosyl-(1-&gt;3)-N-acetyl-alpha-D-galactosaminyl]-L-threonyl-[protein] + UDP-N-acetyl-alpha-D-glucosamine = a 3-O-{beta-D-galactosyl-(1-&gt;3)-[N-acetyl-beta-D-glucosaminyl-(1-&gt;6)]-N-acetyl-alpha-D-galactosaminyl}-L-threonyl-[protein] + UDP + H(+). It catalyses the reaction a beta-D-Gal-(1-&gt;4)-beta-D-GlcNAc-(1-&gt;3)-beta-D-Gal-(1-&gt;4)-beta-D-GlcNAc derivative + UDP-N-acetyl-alpha-D-glucosamine = a beta-D-Gal-(1-&gt;4)-beta-D-GlcNAc-(1-&gt;3)-[beta-D-GlcNAc-(1-&gt;6)]-beta-D-Gal-(1-&gt;4)-N-acetyl-beta-D-glucosaminyl derivative + UDP + H(+). The enzyme catalyses 3-O-[N-acetyl-beta-D-glucosaminyl-(1-&gt;3)-N-acetyl-alpha-D-galactosaminyl]-L-seryl-[protein] + UDP-N-acetyl-alpha-D-glucosamine = 3-O-[N-acetyl-beta-D-glucosaminyl-(1-&gt;3)-[N-acetyl-beta-D-glucosaminyl-(1-&gt;6)]-N-acetyl-alpha-D-galactosaminyl]-L-seryl-[protein] + UDP + H(+). It carries out the reaction a 3-O-[N-acetyl-beta-D-glucosaminyl-(1-&gt;3)-N-acetyl-alpha-D-galactosaminyl]-L-threonyl-[protein] + UDP-N-acetyl-alpha-D-glucosamine = 3-O-[N-acetyl-beta-D-glucosaminyl-(1-&gt;3)-[N-acetyl-beta-D-glucosaminyl-(1-&gt;6)]-N-acetyl-alpha-D-galactosaminyl]-L-threonyl-[protein] + UDP + H(+). The protein operates within protein modification; protein glycosylation. Functionally, glycosyltransferase that can synthesize all known mucin beta 6 N-acetylglucosaminides. Mediates core 2 and core 4 O-glycan branching, 2 important steps in mucin-type biosynthesis. Also has I-branching enzyme activity by converting linear into branched poly-N-acetyllactosaminoglycans, leading to introduce the blood group I antigen during embryonic development. The protein is Beta-1,3-galactosyl-O-glycosyl-glycoprotein beta-1,6-N-acetylglucosaminyltransferase 3 (GCNT3) of Bos taurus (Bovine).